The sequence spans 344 residues: Centromere protein N (344 aa).

This sequence belongs to the CENP-N/CHL4 family.

It is found in the nucleus. The protein localises to the chromosome. Its subcellular location is the centromere. In terms of biological role, probable component of a centromeric complex involved in assembly of kinetochore proteins, mitotic progression and chromosome segregation. In Gallus gallus (Chicken), this protein is Centromere protein N (CENPN).